The chain runs to 536 residues: Glutamyl-tRNA(Gln) amidotransferase subunit B, mitochondrial (536 aa).

The N-terminal 8 residues, 1–8 (MLRVHRLY), are a transit peptide targeting the mitochondrion.

The protein belongs to the GatB/GatE family. GatB subfamily. Subunit of the heterotrimeric GatFAB amidotransferase (AdT) complex, composed of A, B and F subunits.

It is found in the mitochondrion. The enzyme catalyses L-glutamyl-tRNA(Gln) + L-glutamine + ATP + H2O = L-glutaminyl-tRNA(Gln) + L-glutamate + ADP + phosphate + H(+). Functionally, allows the formation of correctly charged Gln-tRNA(Gln) through the transamidation of misacylated Glu-tRNA(Gln) in the mitochondria. The reaction takes place in the presence of glutamine and ATP through an activated gamma-phospho-Glu-tRNA(Gln). The protein is Glutamyl-tRNA(Gln) amidotransferase subunit B, mitochondrial of Eremothecium gossypii (strain ATCC 10895 / CBS 109.51 / FGSC 9923 / NRRL Y-1056) (Yeast).